We begin with the raw amino-acid sequence, 208 residues long: ATP synthase subunit b 1 (208 aa).

Residues 1-18 (MFVSTAFAQTATESQPAS) show a composition bias toward polar residues. Residues 1–26 (MFVSTAFAQTATESQPASTAGEHGAA) are disordered. A helical transmembrane segment spans residues 56–78 (SQVLWLAITFGLFYLFLSRVVLP).

The protein belongs to the ATPase B chain family. In terms of assembly, F-type ATPases have 2 components, F(1) - the catalytic core - and F(0) - the membrane proton channel. F(1) has five subunits: alpha(3), beta(3), gamma(1), delta(1), epsilon(1). F(0) has three main subunits: a(1), b(2) and c(10-14). The alpha and beta chains form an alternating ring which encloses part of the gamma chain. F(1) is attached to F(0) by a central stalk formed by the gamma and epsilon chains, while a peripheral stalk is formed by the delta and b chains.

The protein resides in the cell inner membrane. In terms of biological role, f(1)F(0) ATP synthase produces ATP from ADP in the presence of a proton or sodium gradient. F-type ATPases consist of two structural domains, F(1) containing the extramembraneous catalytic core and F(0) containing the membrane proton channel, linked together by a central stalk and a peripheral stalk. During catalysis, ATP synthesis in the catalytic domain of F(1) is coupled via a rotary mechanism of the central stalk subunits to proton translocation. Component of the F(0) channel, it forms part of the peripheral stalk, linking F(1) to F(0). This is ATP synthase subunit b 1 from Brucella abortus (strain 2308).